The primary structure comprises 586 residues: A-type ATP synthase subunit A (586 aa).

232–239 contacts ATP; that stretch reads GPFGSGKT.

The protein belongs to the ATPase alpha/beta chains family. Has multiple subunits with at least A(3), B(3), C, D, E, F, H, I and proteolipid K(x).

The protein localises to the cell membrane. The catalysed reaction is ATP + H2O + 4 H(+)(in) = ADP + phosphate + 5 H(+)(out). In terms of biological role, component of the A-type ATP synthase that produces ATP from ADP in the presence of a proton gradient across the membrane. The A chain is the catalytic subunit. The chain is A-type ATP synthase subunit A from Methanococcus vannielii (strain ATCC 35089 / DSM 1224 / JCM 13029 / OCM 148 / SB).